Here is a 922-residue protein sequence, read N- to C-terminus: Lacticin 481/lactococcin biosynthesis protein LcnDR2 (922 aa).

Its function is as follows. Could be implicated in the processing or the export process of the lantibiotic lacticin 481/lactococcin DR. This Lactococcus lactis subsp. lactis (Streptococcus lactis) protein is Lacticin 481/lactococcin biosynthesis protein LcnDR2 (lcnDR2).